The primary structure comprises 660 residues: Bifunctional polymyxin resistance protein ArnA (660 aa).

Residues 1–304 are formyltransferase ArnAFT; that stretch reads MKTVVFAYHD…MLGLVQGSRL (304 aa). 86–88 is a binding site for (6R)-10-formyltetrahydrofolate; sequence HLI. H104 acts as the Proton donor; for formyltransferase activity in catalysis. (6R)-10-formyltetrahydrofolate-binding positions include R114 and 136–140; that span reads VKRAD. A dehydrogenase ArnADH region spans residues 314–660; that stretch reads RRTRVLILGV…RTVDLTDKPS (347 aa). NAD(+)-binding positions include D347 and 368–369; that span reads DI. UDP-alpha-D-glucuronate is bound by residues A393, Y398, and 432–433; that span reads TS. E434 functions as the Proton acceptor; for decarboxylase activity in the catalytic mechanism. UDP-alpha-D-glucuronate contacts are provided by residues R460, N492, 526-535, and Y613; that span reads KLIDGGKQKR. R619 serves as the catalytic Proton donor; for decarboxylase activity.

This sequence in the N-terminal section; belongs to the Fmt family. UDP-L-Ara4N formyltransferase subfamily. It in the C-terminal section; belongs to the NAD(P)-dependent epimerase/dehydratase family. UDP-glucuronic acid decarboxylase subfamily. As to quaternary structure, homohexamer, formed by a dimer of trimers.

The catalysed reaction is UDP-alpha-D-glucuronate + NAD(+) = UDP-beta-L-threo-pentopyranos-4-ulose + CO2 + NADH. The enzyme catalyses UDP-4-amino-4-deoxy-beta-L-arabinose + (6R)-10-formyltetrahydrofolate = UDP-4-deoxy-4-formamido-beta-L-arabinose + (6S)-5,6,7,8-tetrahydrofolate + H(+). The protein operates within nucleotide-sugar biosynthesis; UDP-4-deoxy-4-formamido-beta-L-arabinose biosynthesis; UDP-4-deoxy-4-formamido-beta-L-arabinose from UDP-alpha-D-glucuronate: step 1/3. It participates in nucleotide-sugar biosynthesis; UDP-4-deoxy-4-formamido-beta-L-arabinose biosynthesis; UDP-4-deoxy-4-formamido-beta-L-arabinose from UDP-alpha-D-glucuronate: step 3/3. Its pathway is bacterial outer membrane biogenesis; lipopolysaccharide biosynthesis. Its function is as follows. Bifunctional enzyme that catalyzes the oxidative decarboxylation of UDP-glucuronic acid (UDP-GlcUA) to UDP-4-keto-arabinose (UDP-Ara4O) and the addition of a formyl group to UDP-4-amino-4-deoxy-L-arabinose (UDP-L-Ara4N) to form UDP-L-4-formamido-arabinose (UDP-L-Ara4FN). The modified arabinose is attached to lipid A and is required for resistance to polymyxin and cationic antimicrobial peptides. The protein is Bifunctional polymyxin resistance protein ArnA of Shigella flexneri.